A 410-amino-acid polypeptide reads, in one-letter code: Cysteine desulfurase (410 aa).

Lys227 is modified (N6-(pyridoxal phosphate)lysine). Catalysis depends on Cys365, which acts as the Cysteine persulfide intermediate.

The protein belongs to the class-V pyridoxal-phosphate-dependent aminotransferase family. Csd subfamily. Homodimer. Interacts with SufE and the SufBCD complex composed of SufB, SufC and SufD. The interaction with SufE is required to mediate the direct transfer of the sulfur atom from the S-sulfanylcysteine. The cofactor is pyridoxal 5'-phosphate.

It is found in the cytoplasm. The enzyme catalyses (sulfur carrier)-H + L-cysteine = (sulfur carrier)-SH + L-alanine. It catalyses the reaction L-selenocysteine + AH2 = hydrogenselenide + L-alanine + A + H(+). It functions in the pathway cofactor biosynthesis; iron-sulfur cluster biosynthesis. Cysteine desulfurases mobilize the sulfur from L-cysteine to yield L-alanine, an essential step in sulfur metabolism for biosynthesis of a variety of sulfur-containing biomolecules. Component of the suf operon, which is activated and required under specific conditions such as oxidative stress and iron limitation. Acts as a potent selenocysteine lyase in vitro, that mobilizes selenium from L-selenocysteine. Selenocysteine lyase activity is however unsure in vivo. The chain is Cysteine desulfurase from Wigglesworthia glossinidia brevipalpis.